The sequence spans 196 residues: UPF0340 protein TTHA0583 (196 aa).

This sequence belongs to the UPF0340 family.

This Thermus thermophilus (strain ATCC 27634 / DSM 579 / HB8) protein is UPF0340 protein TTHA0583.